Consider the following 453-residue polypeptide: Trigger factor (453 aa).

Positions Gly171 to Ile256 constitute a PPIase FKBP-type domain.

Belongs to the FKBP-type PPIase family. Tig subfamily.

The protein localises to the cytoplasm. The catalysed reaction is [protein]-peptidylproline (omega=180) = [protein]-peptidylproline (omega=0). Functionally, involved in protein export. Acts as a chaperone by maintaining the newly synthesized protein in an open conformation. Functions as a peptidyl-prolyl cis-trans isomerase. In Bradyrhizobium diazoefficiens (strain JCM 10833 / BCRC 13528 / IAM 13628 / NBRC 14792 / USDA 110), this protein is Trigger factor.